We begin with the raw amino-acid sequence, 131 residues long: Fluoride-specific ion channel FluC (131 aa).

3 consecutive transmembrane segments (helical) span residues alanine 3 to leucine 23, isoleucine 34 to glycine 54, and alanine 62 to leucine 82. Glycine 80 and threonine 83 together coordinate Na(+). The chain crosses the membrane as a helical span at residues tryptophan 101 to isoleucine 121.

The protein belongs to the fluoride channel Fluc/FEX (TC 1.A.43) family.

Its subcellular location is the cell inner membrane. The enzyme catalyses fluoride(in) = fluoride(out). Its activity is regulated as follows. Na(+) is not transported, but it plays an essential structural role and its presence is essential for fluoride channel function. In terms of biological role, fluoride-specific ion channel. Important for reducing fluoride concentration in the cell, thus reducing its toxicity. In Aromatoleum aromaticum (strain DSM 19018 / LMG 30748 / EbN1) (Azoarcus sp. (strain EbN1)), this protein is Fluoride-specific ion channel FluC.